The sequence spans 200 residues: Recombination protein RecR (200 aa).

A C4-type zinc finger spans residues 58-73 (CEVCHNLAEEGLCAIC). The Toprim domain occupies 81–176 (GLICVVEEPV…DISRLAYGMP (96 aa)).

The protein belongs to the RecR family.

May play a role in DNA repair. It seems to be involved in an RecBC-independent recombinational process of DNA repair. It may act with RecF and RecO. This Magnetococcus marinus (strain ATCC BAA-1437 / JCM 17883 / MC-1) protein is Recombination protein RecR.